A 280-amino-acid polypeptide reads, in one-letter code: 4-diphosphocytidyl-2-C-methyl-D-erythritol kinase (280 aa).

K8 is an active-site residue. 91 to 101 (PIEAGLAGGSS) contributes to the ATP binding site. The active site involves D133.

The protein belongs to the GHMP kinase family. IspE subfamily.

It carries out the reaction 4-CDP-2-C-methyl-D-erythritol + ATP = 4-CDP-2-C-methyl-D-erythritol 2-phosphate + ADP + H(+). The protein operates within isoprenoid biosynthesis; isopentenyl diphosphate biosynthesis via DXP pathway; isopentenyl diphosphate from 1-deoxy-D-xylulose 5-phosphate: step 3/6. Functionally, catalyzes the phosphorylation of the position 2 hydroxy group of 4-diphosphocytidyl-2C-methyl-D-erythritol. The sequence is that of 4-diphosphocytidyl-2-C-methyl-D-erythritol kinase from Clostridium tetani (strain Massachusetts / E88).